The following is a 356-amino-acid chain: tRNA N6-adenosine threonylcarbamoyltransferase (356 aa).

Residues histidine 115 and histidine 119 each contribute to the Fe cation site. Substrate contacts are provided by residues 138-142 (LVSGG), aspartate 171, glycine 184, and asparagine 283. Aspartate 311 lines the Fe cation pocket.

Belongs to the KAE1 / TsaD family. Fe(2+) serves as cofactor.

It localises to the cytoplasm. It carries out the reaction L-threonylcarbamoyladenylate + adenosine(37) in tRNA = N(6)-L-threonylcarbamoyladenosine(37) in tRNA + AMP + H(+). Its function is as follows. Required for the formation of a threonylcarbamoyl group on adenosine at position 37 (t(6)A37) in tRNAs that read codons beginning with adenine. Is involved in the transfer of the threonylcarbamoyl moiety of threonylcarbamoyl-AMP (TC-AMP) to the N6 group of A37, together with TsaE and TsaB. TsaD likely plays a direct catalytic role in this reaction. The polypeptide is tRNA N6-adenosine threonylcarbamoyltransferase (Prochlorococcus marinus (strain MIT 9515)).